A 433-amino-acid chain; its full sequence is Leucine-rich repeat extensin-like protein 7 (433 aa).

The N-terminal stretch at 1 to 21 (MRIYQPTLLIFTTVVLLSISA) is a signal peptide. Asn71 is a glycosylation site (N-linked (GlcNAc...) asparagine). LRR repeat units lie at residues 98–122 (VKTVSGVDLNQGDIAGHLPEELGLL), 123–145 (TDIALFHVNSNRFCGTLPVGFSQ), 146–170 (LSLLFELDLSNNRFAGKFPEVVIGL), 171–194 (PKLKYLDLRYNEFEGELPESLFDK), 196–217 (LDALFLNSNRFRSKIPVNMGNS), 219–239 (VSVLVLASNRFEGCIPPSFGK), 241–265 (GKTLNEIILMDNGLQSCIPNDMGLL), 266–289 (QNVTVLDISYNWLVGELPKSMGQM), and 290–313 (ENLEVLNVERNMLSGLIPDELCSL). Asn267 carries an N-linked (GlcNAc...) asparagine glycan. A glycan (N-linked (GlcNAc...) asparagine) is linked at Asn340. The segment at 380-433 (FSPPPSQISPSSQPLAPAPSPTSPPLSTPPPARPCPPVYSPPPPPPLSLAPSMN) is disordered. The segment at 381–433 (SPPPSQISPSSQPLAPAPSPTSPPLSTPPPARPCPPVYSPPPPPPLSLAPSMN) is contains the Ser-Pro(4) repeats. The span at 395–427 (APAPSPTSPPLSTPPPARPCPPVYSPPPPPPLS) shows a compositional bias: pro residues.

Hydroxylated on proline residues in the S-P-P-P-P repeat. In terms of processing, O-glycosylated on hydroxyprolines. In terms of tissue distribution, expressed in flowers and pollen.

It is found in the secreted. The protein resides in the cell wall. Its function is as follows. Modulates cell morphogenesis by regulating cell wall formation and assembly, and/or growth polarization. The polypeptide is Leucine-rich repeat extensin-like protein 7 (LRX7) (Arabidopsis thaliana (Mouse-ear cress)).